The chain runs to 72 residues: Conotoxin Gla(2)-TxVI/A (72 aa).

The N-terminal stretch at 1–19 is a signal peptide; sequence MQKLIILLLVAAVLMSTQA. A propeptide spanning residues 20–44 is cleaved from the precursor; it reads LFQEKRPMKKIDFLSKGKTDAEKQQ. Intrachain disulfides connect C48/C62, C55/C66, and C61/C70. 4-carboxyglutamate is present on E56. P58 bears the 4-hydroxyproline mark. A Serine amide modification is found at S71.

Belongs to the conotoxin O2 superfamily. Brominated at one of the Trp residues. As to expression, expressed by the venom duct.

It is found in the secreted. This chain is Conotoxin Gla(2)-TxVI/A, found in Conus textile (Cloth-of-gold cone).